Here is a 204-residue protein sequence, read N- to C-terminus: Protein GrpE (204 aa).

Positions 1–52 (MSSKNNPESETKAKNKWEKVMEAEEEQEEGGGDGSQEMEPHREGLEFPSREK) are disordered. Composition is skewed to basic and acidic residues over residues 7–22 (PESE…KVME) and 38–52 (MEPH…SREK).

It belongs to the GrpE family. Homodimer.

The protein resides in the cytoplasm. Functionally, participates actively in the response to hyperosmotic and heat shock by preventing the aggregation of stress-denatured proteins, in association with DnaK and GrpE. It is the nucleotide exchange factor for DnaK and may function as a thermosensor. Unfolded proteins bind initially to DnaJ; upon interaction with the DnaJ-bound protein, DnaK hydrolyzes its bound ATP, resulting in the formation of a stable complex. GrpE releases ADP from DnaK; ATP binding to DnaK triggers the release of the substrate protein, thus completing the reaction cycle. Several rounds of ATP-dependent interactions between DnaJ, DnaK and GrpE are required for fully efficient folding. In Coxiella burnetii (strain Dugway 5J108-111), this protein is Protein GrpE.